Here is a 434-residue protein sequence, read N- to C-terminus: Glutamyl-tRNA reductase (434 aa).

Substrate is bound by residues 49-52 (TCNR), S109, 114-116 (EPQ), and Q120. The Nucleophile role is filled by C50. 189–194 (GAGEMC) is an NADP(+) binding site.

Belongs to the glutamyl-tRNA reductase family. In terms of assembly, homodimer.

The catalysed reaction is (S)-4-amino-5-oxopentanoate + tRNA(Glu) + NADP(+) = L-glutamyl-tRNA(Glu) + NADPH + H(+). It functions in the pathway porphyrin-containing compound metabolism; protoporphyrin-IX biosynthesis; 5-aminolevulinate from L-glutamyl-tRNA(Glu): step 1/2. Its function is as follows. Catalyzes the NADPH-dependent reduction of glutamyl-tRNA(Glu) to glutamate 1-semialdehyde (GSA). In Geobacter metallireducens (strain ATCC 53774 / DSM 7210 / GS-15), this protein is Glutamyl-tRNA reductase.